The chain runs to 565 residues: Calcium-dependent protein kinase 21 (565 aa).

Gly2 carries N-myristoyl glycine lipidation. The segment at 28–55 (PVPDAEAASPRKDGVDGDGDDVRGGGGG) is disordered. Residues 36-50 (SPRKDGVDGDGDDVR) show a composition bias toward basic and acidic residues. The Protein kinase domain occupies 77-358 (YVLGKELGRG…AKQVLEHPWL (282 aa)). Residues 83 to 91 (LGRGEFGVT) and Lys106 each bind ATP. Asp224 acts as the Proton acceptor in catalysis. Residues 364–394 (APNVSLGDAVRARLQQFSAMNKFKKKALGVV) form an autoinhibitory domain region. EF-hand domains are found at residues 401 to 436 (EEVDKYVQMFHHMDKDKNGHLSLDELLEGLHINGQP), 437 to 472 (VPEPEIRMLLEAADTDGNGTLDCDEFVTVSVHLKKM), 473 to 500 (SNDEYLAAAFNYFDKDGSGFIELDELRE), and 504 to 539 (PNEQAILEILRDVDTDKDGRISYQEFELMMKSGADW). Asp414, Asp416, Asn418, His420, Glu425, Asp450, Asp452, Asn454, Thr456, Glu461, Asp486, Asp488, Ser490, Glu497, Asp517, Asp519, Asp521, Arg523, and Glu528 together coordinate Ca(2+).

The protein belongs to the protein kinase superfamily. Ser/Thr protein kinase family. CDPK subfamily. In terms of tissue distribution, expressed in spikelets and developing seeds.

It is found in the membrane. It carries out the reaction L-seryl-[protein] + ATP = O-phospho-L-seryl-[protein] + ADP + H(+). The catalysed reaction is L-threonyl-[protein] + ATP = O-phospho-L-threonyl-[protein] + ADP + H(+). Its activity is regulated as follows. Activated by calcium. Autophosphorylation may play an important role in the regulation of the kinase activity. Functionally, may play a role in signal transduction pathways that involve calcium as a second messenger. Functions in signal transduction pathways that positively regulate responses to abscisic acid (ABA) and salt stress. This Oryza sativa subsp. japonica (Rice) protein is Calcium-dependent protein kinase 21.